The chain runs to 335 residues: Cholinephosphotransferase 1 (335 aa).

Helical transmembrane passes span 53 to 73 (PNAI…PLIA) and 84 to 108 (FWAY…GKQA). Asn-54 provides a ligand contact to CDP-choline. Mg(2+) is bound by residues Asp-101 and Asp-104. Arg-109 provides a ligand contact to CDP-choline. 6 helical membrane-spanning segments follow: residues 116 to 140 (PLGE…SCIA), 151 to 169 (FFCC…WQTY), 181 to 197 (VTEV…VSAF), 213 to 238 (ELKF…RIIF), 267 to 276 (IGPGLLFLDQ), and 284 to 313 (EYVV…IAAH). Mg(2+) is bound at residue Asp-122. His-123 serves as the catalytic Proton acceptor. Residue Asp-126 participates in Mg(2+) binding.

Belongs to the CDP-alcohol phosphatidyltransferase class-I family. Requires Mg(2+) as cofactor. Mn(2+) is required as a cofactor.

The protein resides in the golgi apparatus membrane. It catalyses the reaction CDP-choline + a 1,2-diacyl-sn-glycerol = a 1,2-diacyl-sn-glycero-3-phosphocholine + CMP + H(+). The catalysed reaction is 1-octadecanoyl-2-(5Z,8Z,11Z,14Z-eicosatetraenoyl)-sn-glycerol + CDP-choline = 1-octadecanoyl-2-(5Z,8Z,11Z,14Z-eicosatetraenoyl)-sn-glycero-3-phosphocholine + CMP + H(+). It carries out the reaction 1-hexadecanoyl-2-(9Z-octadecenoyl)-sn-glycerol + CDP-choline = 1-hexadecanoyl-2-(9Z-octadecenoyl)-sn-glycero-3-phosphocholine + CMP + H(+). The enzyme catalyses 1-hexadecanoyl-2-(4Z,7Z,10Z,13Z,16Z,19Z-docosahexaenoyl)-sn-glycerol + CDP-choline = 1-hexadecanoyl-2-(4Z,7Z,10Z,13Z,16Z,19Z-docosahexaenoyl)-sn-glycero-3-phosphocholine + CMP + H(+). It catalyses the reaction 1,2-dioctanoyl-sn-glycerol + CDP-choline = 1,2-dioctanoyl-sn-glycero-3-phosphocholine + CMP + H(+). Its pathway is phospholipid metabolism; phosphatidylcholine biosynthesis; phosphatidylcholine from phosphocholine: step 2/2. In terms of biological role, catalyzes the final step of de novo phosphatidylcholine (PC) synthesis, i.e. the transfer of choline phosphate from CDP-choline to the free hydroxyl of a diacylglycerol (DAG), producing a PC. It thereby plays a central role in the formation and maintenance of vesicular membranes. In Gallus gallus (Chicken), this protein is Cholinephosphotransferase 1 (CHPT1).